Here is a 257-residue protein sequence, read N- to C-terminus: Short-chain dehydrogenase reductase 3a (257 aa).

12-36 (IITGGASGIGAEAVRLFTDHGAKVV) provides a ligand contact to NAD(+). S144 serves as a coordination point for substrate. Y157 (proton acceptor) is an active-site residue.

Belongs to the short-chain dehydrogenases/reductases (SDR) family. Highly expressed in the radicle tip, lateral root primordia and tips, and the area surrounding the cotyledon hydathode of young seedlings.

Confers resistance to the incompatible pathogenic bacteria P.syringae pv. tomato DC3000 in a PR1-dependent manner. Seems not involved in abscisic acid (ABA) biosynthesis. The chain is Short-chain dehydrogenase reductase 3a (SDR3a) from Arabidopsis thaliana (Mouse-ear cress).